The following is a 99-amino-acid chain: Acylphosphatase (99 aa).

One can recognise an Acylphosphatase-like domain in the interval 5–97 (ILQVMIRGRV…RAGEKFSVLP (93 aa)). Active-site residues include Arg-20 and Asn-38.

This sequence belongs to the acylphosphatase family.

It catalyses the reaction an acyl phosphate + H2O = a carboxylate + phosphate + H(+). The protein is Acylphosphatase (acyP) of Bradyrhizobium diazoefficiens (strain JCM 10833 / BCRC 13528 / IAM 13628 / NBRC 14792 / USDA 110).